The chain runs to 87 residues: Apolipoprotein C-I (87 aa).

An N-terminal signal peptide occupies residues 1–26 (MRLILSLPVLAVVLAMVLEGPAPAQA).

The protein belongs to the apolipoprotein C1 family.

Its subcellular location is the secreted. Functionally, inhibitor of lipoprotein binding to the low density lipoprotein (LDL) receptor, LDL receptor-related protein, and very low density lipoprotein (VLDL) receptor. Associates with high density lipoproteins (HDL) and the triacylglycerol-rich lipoproteins in the plasma and makes up about 10% of the protein of the VLDL and 2% of that of HDL. Appears to interfere directly with fatty acid uptake and is also the major plasma inhibitor of cholesteryl ester transfer protein (CETP). Binds free fatty acids and reduces their intracellular esterification. Modulates the interaction of APOE with beta-migrating VLDL and inhibits binding of beta-VLDL to the LDL receptor-related protein. The sequence is that of Apolipoprotein C-I (APOC1) from Pteropus vampyrus (Large flying fox).